The primary structure comprises 372 residues: Phospho-N-acetylmuramoyl-pentapeptide-transferase (372 aa).

The next 10 helical transmembrane spans lie at 21–41 (SLTLRALLAVITALAFSMIFG), 71–91 (TPTMGGVLILSAIGVSTLLWA), 98–118 (VWILLIVMIIFGAVGWADDWL), 134–154 (YFWLSMGALFVGISLYYIATL), 176–196 (MIPFSAVPFGIGFIIFTYFVI), 211–231 (GLAILPVVLVAAGLGAMAYVS), 251–271 (VIIVCGAMIGAGLGFLWFNAH), 275–295 (VFMGDVGALSLGAMLGTIAVM), 300–320 (IAFAIMGGLFVAEALSVMLQV), and 349–369 (QVVARFWIIAIILVILGLMTL).

The protein belongs to the glycosyltransferase 4 family. MraY subfamily. It depends on Mg(2+) as a cofactor.

Its subcellular location is the cell inner membrane. The enzyme catalyses UDP-N-acetyl-alpha-D-muramoyl-L-alanyl-gamma-D-glutamyl-meso-2,6-diaminopimeloyl-D-alanyl-D-alanine + di-trans,octa-cis-undecaprenyl phosphate = di-trans,octa-cis-undecaprenyl diphospho-N-acetyl-alpha-D-muramoyl-L-alanyl-D-glutamyl-meso-2,6-diaminopimeloyl-D-alanyl-D-alanine + UMP. It functions in the pathway cell wall biogenesis; peptidoglycan biosynthesis. Catalyzes the initial step of the lipid cycle reactions in the biosynthesis of the cell wall peptidoglycan: transfers peptidoglycan precursor phospho-MurNAc-pentapeptide from UDP-MurNAc-pentapeptide onto the lipid carrier undecaprenyl phosphate, yielding undecaprenyl-pyrophosphoryl-MurNAc-pentapeptide, known as lipid I. The sequence is that of Phospho-N-acetylmuramoyl-pentapeptide-transferase from Psychrobacter arcticus (strain DSM 17307 / VKM B-2377 / 273-4).